Consider the following 186-residue polypeptide: Ran guanine nucleotide release factor (186 aa).

An interaction with RAN region spans residues 27–70; it reads DLRPVPDHQEVFCHRVTDQSLIVELLELQAHVQGEEAARYHFED.

The protein belongs to the MOG1 family. In terms of assembly, monomer. Interacts with RAN, both RAN-GTP and RAN-GDP. Competes with RCC1 for a common binding site on RAN and thereby inhibits RCC1-mediated nucleotide exchange. Forms a complex with RAN-GTP and RANBP1. Interacts with the cytoplasmic loop 2 of SCN5A.

The protein resides in the nucleus. The protein localises to the cytoplasm. It localises to the perinuclear region. It is found in the cell membrane. Its function is as follows. May regulate the intracellular trafficking of RAN. Promotes guanine nucleotide release from RAN and inhibits binding of new GTP by preventing the binding of the RAN guanine nucleotide exchange factor RCC1. Regulates the levels of GTP-bound RAN in the nucleus, and thereby plays a role in the regulation of RAN-dependent mitotic spindle dynamics. Enhances the expression of SCN5A at the cell membrane in cardiomyocytes. This is Ran guanine nucleotide release factor (RANGRF) from Bos taurus (Bovine).